Consider the following 227-residue polypeptide: Ferritin light chain (227 aa).

Residues 1-19 (MKFFVALALFACLGSLALA) form the signal peptide. An intrachain disulfide couples Cys-25 to Cys-44. A Ferritin-like diiron domain is found at 48–208 (FAGIDHIEPE…GYANDLAKLM (161 aa)).

This sequence belongs to the ferritin family. In terms of assembly, oligomer of 12 light (L) chains and 12 heavy (H) chains; L and H chains are disulfide-linked. The functional molecule forms a roughly spherical shell with a diameter of 12 nm and contains a central cavity into which the insoluble ferric iron core is deposited. As to expression, expressed in hemolymph, gut, ovaries and to a lesser extent in testes (at protein level). Expressed in the head (at protein level).

It is found in the golgi apparatus. The protein localises to the secreted. In terms of biological role, stores iron in a soluble, non-toxic, readily available form. Important for iron homeostasis. Iron is taken up in the ferrous form and deposited as ferric hydroxides after oxidation. Ferritin is composed of a heavy (H) chain which is responsible for the oxidation and uptake of ferrous iron, and a light (L) chain which facilitates the nucleation of the ferrihydrite iron core. Required for dietary iron absorption in the midgut. Involved in tissue iron detoxification by exporting excess iron. Plays a role in the maintenance of circadian rhythms. Required for embryo and larval development. This chain is Ferritin light chain, found in Drosophila melanogaster (Fruit fly).